The following is a 230-amino-acid chain: Orotidine 5'-phosphate decarboxylase (230 aa).

Substrate-binding positions include aspartate 10, lysine 31, 58-67 (DLKLHDIPNT), threonine 117, arginine 179, glutamine 188, glycine 208, and arginine 209. Lysine 60 serves as the catalytic Proton donor.

It belongs to the OMP decarboxylase family. Type 1 subfamily. As to quaternary structure, homodimer.

The enzyme catalyses orotidine 5'-phosphate + H(+) = UMP + CO2. Its pathway is pyrimidine metabolism; UMP biosynthesis via de novo pathway; UMP from orotate: step 2/2. Its function is as follows. Catalyzes the decarboxylation of orotidine 5'-monophosphate (OMP) to uridine 5'-monophosphate (UMP). The sequence is that of Orotidine 5'-phosphate decarboxylase from Staphylococcus aureus (strain Mu3 / ATCC 700698).